The primary structure comprises 910 residues: Staphylococcal nuclease domain-containing protein 1 (910 aa).

Position 2 is an N-acetylalanine (alanine 2). TNase-like domains follow at residues 18-166 (TVQR…MWSE), 193-328 (KPVN…IWRD), and 341-496 (KQFV…LHSK). Threonine 103 is modified (phosphothreonine). The residue at position 193 (lysine 193) is an N6-acetyllysine. Threonine 240 is subject to Phosphothreonine. 2 short sequence motifs (nuclear localization signal) span residues 321 to 325 (RRLRI) and 388 to 392 (KKLRP). Serine 426 bears the Phosphoserine mark. A Glycyl lysine isopeptide (Lys-Gly) (interchain with G-Cter in SUMO2) cross-link involves residue lysine 513. The region spanning 525–660 (GRSEAVVEYV…KQKKEKVWAH (136 aa)) is the TNase-like 4 domain. An N6-acetyllysine modification is found at lysine 641. Serine 645 is modified (phosphoserine). In terms of domain architecture, Tudor spans 729–787 (APRRGEFCIAKFVDGEWYRARVEKVESPAKIHVFYIDYGNREVLPSTRLGTLSPAFSTR). At threonine 779 the chain carries Phosphothreonine. Phosphoserine occurs at positions 781, 785, and 909.

Forms a ternary complex with STAT6 and POLR2A. Associates with the RNA-induced silencing complex (RISC). Interacts with the RISC components AGO2, FMR1 and TNRC6A. Interacts with GTF2E1 and GTF2E2. Interacts with PIM1. Interacts with STAT5. Interacts with SYT11 (via C2 2 domain); the interaction with SYT11 is direct. As to quaternary structure, (Microbial infection) Interacts with EAV NSP1. Binds to acidic transactivation domain of EBNA2. Interacts with SARS-CoV-2 NSP9. Phosphorylated by PIM1 in vitro. As to expression, ubiquitously expressed.

It is found in the cytoplasm. It localises to the nucleus. Its subcellular location is the melanosome. It catalyses the reaction Endonucleolytic cleavage to nucleoside 3'-phosphates and 3'-phosphooligonucleotide end-products.. In terms of biological role, endonuclease that mediates miRNA decay of both protein-free and AGO2-loaded miRNAs. As part of its function in miRNA decay, regulates mRNAs involved in G1-to-S phase transition. Functions as a bridging factor between STAT6 and the basal transcription factor. Plays a role in PIM1 regulation of MYB activity. Functions as a transcriptional coactivator for STAT5. (Microbial infection) Functions as a transcriptional coactivator for the Epstein-Barr virus nuclear antigen 2 (EBNA2). Its function is as follows. (Microbial infection) Promotes SARS-CoV-2 RNA synthesis by binding to negative-sense RNA and the viral protein nsp9. In Homo sapiens (Human), this protein is Staphylococcal nuclease domain-containing protein 1 (SND1).